The chain runs to 370 residues: MTTPTPLRSVTVNTPPPYTIAIGPGLLHDPPRLAATIRGRHALILSDSEVAPRYAAQLHETLLRARPDLHLNVFTLPAGETSKSLENFGAAIAQLATLGATRDACLFALGGGVIGDLTGFTAACWMRGIDYVQVPTTLLAMVDSSVGGKTAVDIPQGKNMVGAFHPPRAVIADTDTLATLPLRELRAGLSEVIKYGAIRDPVFFHWLQTTREALLARDPAALAQAIARSCEHKADIVGRDPLEKGERVLLNLGHTFGHAIETTQGYSTPGSNNLNHGEAVAVGMVLAARLSNTLGLAPAEDTETLKNLLDAYGLPTVLPSGLKPETLLERMRLDKKNIAGRLRLVLWRGIGHAEAVPDVDEAAVRQILAN.

Residues 112–116 (GVIGD), 136–137 (TT), K149, K158, and 176–179 (TLAT) contribute to the NAD(+) site. E191, H254, and H276 together coordinate Zn(2+).

This sequence belongs to the sugar phosphate cyclases superfamily. Dehydroquinate synthase family. Co(2+) serves as cofactor. It depends on Zn(2+) as a cofactor. NAD(+) is required as a cofactor.

It localises to the cytoplasm. It carries out the reaction 7-phospho-2-dehydro-3-deoxy-D-arabino-heptonate = 3-dehydroquinate + phosphate. Its pathway is metabolic intermediate biosynthesis; chorismate biosynthesis; chorismate from D-erythrose 4-phosphate and phosphoenolpyruvate: step 2/7. Catalyzes the conversion of 3-deoxy-D-arabino-heptulosonate 7-phosphate (DAHP) to dehydroquinate (DHQ). This chain is 3-dehydroquinate synthase, found in Xylella fastidiosa (strain M12).